A 387-amino-acid chain; its full sequence is 3-ketoacyl-CoA thiolase (387 aa).

Residue cysteine 91 is the Acyl-thioester intermediate of the active site. Catalysis depends on proton acceptor residues histidine 343 and cysteine 373.

It belongs to the thiolase-like superfamily. Thiolase family. Heterotetramer of two alpha chains (FadB) and two beta chains (FadA).

The protein resides in the cytoplasm. The enzyme catalyses an acyl-CoA + acetyl-CoA = a 3-oxoacyl-CoA + CoA. The protein operates within lipid metabolism; fatty acid beta-oxidation. In terms of biological role, catalyzes the final step of fatty acid oxidation in which acetyl-CoA is released and the CoA ester of a fatty acid two carbons shorter is formed. This chain is 3-ketoacyl-CoA thiolase, found in Shigella sonnei (strain Ss046).